The primary structure comprises 135 residues: Biglycan (135 aa).

5 LRR repeats span residues 4 to 24 (KLNY…DLPE), 25 to 46 (TLNE…DLLR), 49 to 72 (KLYR…SFLP), 73 to 95 (TLRE…PDLK), and 96 to 117 (LLQV…DFCP). A glycan (N-linked (GlcNAc...) asparagine) is linked at N65. N106 is a glycosylation site (N-linked (GlcNAc...) asparagine).

The protein belongs to the small leucine-rich proteoglycan (SLRP) family. SLRP class I subfamily. In terms of assembly, homodimer. Forms a ternary complex with MFAP2 and ELN. In terms of processing, the two attached glycosaminoglycan chains can be either chondroitin sulfate or dermatan sulfate. In terms of tissue distribution, found in several connective tissues, especially in articular cartilages.

The protein resides in the secreted. It localises to the extracellular space. The protein localises to the extracellular matrix. May be involved in collagen fiber assembly. The polypeptide is Biglycan (BGN) (Oryctolagus cuniculus (Rabbit)).